The chain runs to 1040 residues: Nucleotide-binding oligomerization domain-containing protein 2 (1040 aa).

CARD domains lie at 26–122 (CEMC…LHGC) and 126–218 (HSLH…EAAT). The ATG16L1-binding motif signature appears at 63 to 77 (WEVLSWEDYEGFHLL). Residues threonine 239, tyrosine 252, threonine 253, glycine 302, serine 303, glycine 304, lysine 305, serine 306, and threonine 307 each coordinate ADP. Residues 241–274 (DGAETLCLEDIYTENVLEVWADVGMAGPPQKSPA) are required for CARD9 binding. Positions 293–618 (DTVLVVGEAG…FFAAFYLALS (326 aa)) constitute an NACHT domain. 299–306 (GEAGSGKS) is an ATP binding site. Residue cysteine 395 is the site of S-palmitoyl cysteine attachment. Residue histidine 603 coordinates ADP. LRR repeat units follow at residues 791–812 (RPVA…QLLP), 816–839 (VCKA…IECA), 844–865 (QLQK…SMAK), 872–884 (NFLA…NYIT), 900–920 (SLQF…QALA), 928–949 (SLRW…ALAL), 956–976 (MLEE…CSLA), 984–1005 (SLKI…ALLQ), and 1012–1032 (TILE…DKLG). Cysteine 1033 carries S-palmitoyl cysteine lipidation.

Belongs to the NOD1-NOD2 family. As to quaternary structure, homooligomer: homooligomerizes following muramyl dipeptide (MDP)-binding, promoting RIPK2 recruitment. Interacts (via CARD domain) with RIPK2 (via CARD domain). Following RIPK2 recruitment, RIPK2 homooligomerizes via its CARD domain and forms long filaments named RIPosomes. Interacts (via CARD domain) with ubiquitin; inhibiting interaction with RIPK2. Component of a signaling complex consisting of ARHGEF2, NOD2 and RIPK2. Interacts with ANKRD17 (via N-terminus). Interacts with HSPA1A; the interaction enhances NOD2 stability. Interacts (via both CARD domains) with HSP90; the interaction enhances NOD2 stability. Interacts (via CARD domain) with SOCS3; the interaction promotes NOD2 degradation. Interacts (via CARD domain) with ERBIN; the interaction inhibits activation of NOD2. Interacts with MAPKBP1; the interaction is enhanced in the presence of muramyl dipeptide (MDP) and inhibits NOD2 homooligomerization and activation. Interacts with INAVA; the interaction takes place upon Pattern recognition receptor (PRR) stimulation. Interacts (via NACHT domain) with CARD9. Interacts (via CARD domain) with CASP1; this interaction leads to IL1B processing. Also interacts with CASP4. Interacts with NLRP1; this interaction is enhanced in the presence of muramyl dipeptide (MDP) and leads to increased IL1B release. Interacts with NLRP12; this interaction promotes degradation of NOD2 through the ubiquitin-proteasome pathway. Interacts with ANKHD1, C10orf67, CHMP5, DOCK7, ENTR1, KRT15, LDOC1, PPP1R12C, PPP2R3B, TRIM41 and VIM. Interacts with MAVS; interaction takes place following single-stranded RNA (ssRNA)-binding. Interacts with ATG16L1. Interacts with IRGM; promoting IRGM 'Lys-63'-linked polyubiquitination, which is required for interactions with the core autophagy factors. Post-translationally, palmitoylated by ZDHHC5; palmitoylation is required for proper recruitment to the bacterial entry site and hence for proper signaling upon cognate peptidoglycan detection. Palmitoylation promotes localization to the cell membrane. Palmitoylation protects from SQSTM1/p62-dependent autophagic degradation. In terms of processing, polyubiquitinated by TRIM27, leading to proteasome-mediated degradation. Polyubiquitinated and degraded following muramyl dipeptide (MDP) stimulation, conferring MDP tolerance and preventing septic shock. Degraded via selective autophagy following interaction with IRGM. IRGM promotes NOD2-RIPK2 RIPosome recruitment to autophagosome membranes, promoting their SQSTM1/p62-dependent autophagic degradation. Post-translationally, O-glycosylated by OGT, O-GlcNAcylation increases protein stability. Expressed in monocytes, macrophages, dendritic cells, hepatocytes, preadipocytes, epithelial cells of oral cavity, lung and intestine, with higher expression in ileal Paneth cells and in intestinal stem cells. As to expression, expressed at higher level in leukocytes.

Its subcellular location is the cell membrane. It localises to the basolateral cell membrane. It is found in the cytoplasm. The protein resides in the mitochondrion. ADP-binding promotes an inactive closed conformation. In terms of biological role, pattern recognition receptor (PRR) that detects bacterial peptidoglycan fragments and other danger signals and plays an important role in gastrointestinal immunity. Specifically activated by muramyl dipeptide (MDP), a fragment of bacterial peptidoglycan found in every bacterial peptidoglycan type. NOD2 specifically recognizes and binds 6-O-phospho-MDP, the phosphorylated form of MDP, which is generated by NAGK. 6-O-phospho-MDP-binding triggers oligomerization that facilitates the binding and subsequent activation of the proximal adapter receptor-interacting RIPK2. Following recruitment, RIPK2 undergoes 'Met-1'- (linear) and 'Lys-63'-linked polyubiquitination by E3 ubiquitin-protein ligases XIAP, BIRC2, BIRC3 and the LUBAC complex, becoming a scaffolding protein for downstream effectors, triggering activation of the NF-kappa-B and MAP kinases signaling. This in turn leads to the transcriptional activation of hundreds of genes involved in immune response. Its ability to detect bacterial MDP plays a central role in maintaining the equilibrium between intestinal microbiota and host immune responses to control inflammation. An imbalance in this relationship results in dysbiosis, whereby pathogenic bacteria prevail on commensals, causing damage in the intestinal epithelial barrier as well as allowing bacterial invasion and inflammation. Acts as a regulator of appetite by sensing MDP in a subset of brain neurons: microbiota-derived MDP reach the brain, where they bind and activate NOD2 in inhibitory hypothalamic neurons, decreasing neuronal activity, thereby regulating satiety and body temperature. NOD2-dependent MDP-sensing of bacterial cell walls in the intestinal epithelial compartment contributes to sustained postnatal growth upon undernutrition. Also plays a role in antiviral response by acting as a sensor of single-stranded RNA (ssRNA) from viruses: upon ssRNA-binding, interacts with MAVS, leading to activation of interferon regulatory factor-3/IRF3 and expression of type I interferon. Also acts as a regulator of autophagy in dendritic cells via its interaction with ATG16L1, possibly by recruiting ATG16L1 at the site of bacterial entry. NOD2 activation in the small intestine crypt also contributes to intestinal stem cells survival and function: acts by promoting mitophagy via its association with ATG16L1. In addition to its main role in innate immunity, also regulates the adaptive immune system by acting as regulator of helper T-cell and regulatory T-cells (Tregs). Besides recognizing pathogens, also involved in the endoplasmic reticulum stress response: acts by sensing and binding to the cytosolic metabolite sphingosine-1-phosphate generated in response to endoplasmic reticulum stress, initiating an inflammation process that leads to activation of the NF-kappa-B and MAP kinases signaling. May also be involved in NLRP1 activation following activation by MDP, leading to CASP1 activation and IL1B release in macrophages. Its function is as follows. Acts as a pattern recognition receptor (PRR); able to activate NF-kappa-B. Can activate NF-kappa-B in a muramyl dipeptide (MDP)-independent manner. This Homo sapiens (Human) protein is Nucleotide-binding oligomerization domain-containing protein 2.